Consider the following 252-residue polypeptide: Imidazole glycerol phosphate synthase subunit HisF (252 aa).

Catalysis depends on residues Asp-11 and Asp-130.

Belongs to the HisA/HisF family. Heterodimer of HisH and HisF.

It is found in the cytoplasm. The enzyme catalyses 5-[(5-phospho-1-deoxy-D-ribulos-1-ylimino)methylamino]-1-(5-phospho-beta-D-ribosyl)imidazole-4-carboxamide + L-glutamine = D-erythro-1-(imidazol-4-yl)glycerol 3-phosphate + 5-amino-1-(5-phospho-beta-D-ribosyl)imidazole-4-carboxamide + L-glutamate + H(+). The protein operates within amino-acid biosynthesis; L-histidine biosynthesis; L-histidine from 5-phospho-alpha-D-ribose 1-diphosphate: step 5/9. In terms of biological role, IGPS catalyzes the conversion of PRFAR and glutamine to IGP, AICAR and glutamate. The HisF subunit catalyzes the cyclization activity that produces IGP and AICAR from PRFAR using the ammonia provided by the HisH subunit. The sequence is that of Imidazole glycerol phosphate synthase subunit HisF from Bacillus mycoides (strain KBAB4) (Bacillus weihenstephanensis).